We begin with the raw amino-acid sequence, 679 residues long: Methionine--tRNA ligase (679 aa).

The 'HIGH' region motif lies at 15 to 25; that stretch reads PYANGSIHLGH. The Zn(2+) site is built by Cys146, Cys149, Cys159, and Cys162. The 'KMSKS' region motif lies at 332 to 336; it reads KMSKS. Position 335 (Lys335) interacts with ATP. Positions 577-679 constitute a tRNA-binding domain; that stretch reads DFAKVDMRVA…AGALPGMPVK (103 aa).

It belongs to the class-I aminoacyl-tRNA synthetase family. MetG type 1 subfamily. As to quaternary structure, homodimer. It depends on Zn(2+) as a cofactor.

The protein localises to the cytoplasm. The enzyme catalyses tRNA(Met) + L-methionine + ATP = L-methionyl-tRNA(Met) + AMP + diphosphate. In terms of biological role, is required not only for elongation of protein synthesis but also for the initiation of all mRNA translation through initiator tRNA(fMet) aminoacylation. The protein is Methionine--tRNA ligase of Sodalis glossinidius (strain morsitans).